Here is a 291-residue protein sequence, read N- to C-terminus: MIFAKGHGTENDFVVLPDLDAALSLTPSAVAALCDRRRGLGADGVLRVTRAGAARAAGVFDRLPDGVSAGDWYMDYRNADGSIAQMCGNGVRVFAHYLRASGLESADEFVVGSLAGPRPVVLHGFDPARATTAEVTVEMGKANQFGAGSAVVGGRSFDGLAVDVGNPHLACVGITADDLAALDVAAPVSFDPALFPDGVNVEVLTASVDGAVSMRVHERGVGETRSCGTGTVAATVAALAHDGADTGTLRVRIPGGEVTVTVTESTSYLRGPSVLVARGELDPHWWHAVAG.

Positions 11 and 78 each coordinate substrate. C87 serves as the catalytic Proton donor. Substrate contacts are provided by residues 88–89 (GN), N166, N200, and 218–219 (ER). The Proton acceptor role is filled by C227. 228–229 (GT) contacts substrate.

This sequence belongs to the diaminopimelate epimerase family. Homodimer.

It localises to the cytoplasm. It catalyses the reaction (2S,6S)-2,6-diaminopimelate = meso-2,6-diaminopimelate. It functions in the pathway amino-acid biosynthesis; L-lysine biosynthesis via DAP pathway; DL-2,6-diaminopimelate from LL-2,6-diaminopimelate: step 1/1. In terms of biological role, catalyzes the stereoinversion of LL-2,6-diaminopimelate (L,L-DAP) to meso-diaminopimelate (meso-DAP), a precursor of L-lysine and an essential component of the bacterial peptidoglycan. This is Diaminopimelate epimerase from Mycolicibacterium smegmatis (strain ATCC 700084 / mc(2)155) (Mycobacterium smegmatis).